Reading from the N-terminus, the 178-residue chain is uncharacterized protein (178 aa).

Residues 52–177 form the MSP domain; it reads HIAIEDRAHQ…RRLPASFLST (126 aa).

This is an uncharacterized protein from Caenorhabditis elegans.